A 398-amino-acid polypeptide reads, in one-letter code: O-methyltransferase aoiO (398 aa).

An S-adenosyl-L-methionine-binding site is contributed by D251. Catalysis depends on H299, which acts as the Proton acceptor.

Belongs to the class I-like SAM-binding methyltransferase superfamily. Cation-independent O-methyltransferase family.

Functionally, O-methyltransferase; part of the gene cluster that mediates the biosynthesis of a methylated derivative of known natural products orthosporin and diaporthin. Seems not to be involved in the biosynthesis of the identified final product of the pathway and its function has still to be determined. The polypeptide is O-methyltransferase aoiO (Aspergillus oryzae (strain ATCC 42149 / RIB 40) (Yellow koji mold)).